The sequence spans 210 residues: Small ribosomal subunit protein uS5 (210 aa).

The segment covering 1–11 (MTQPNTQTTPN) has biased composition (polar residues). The interval 1–56 (MTQPNTQTTPNDVPAAAEGQHQEQQQQQRRGGGRERRGGGRRGDRRGQERDSEWQE) is disordered. Positions 18–29 (EGQHQEQQQQQR) are enriched in low complexity. Positions 32 to 56 (GGRERRGGGRRGDRRGQERDSEWQE) are enriched in basic and acidic residues. The S5 DRBM domain occupies 54–117 (WQERVVQIRR…ADGKKHLVKV (64 aa)).

This sequence belongs to the universal ribosomal protein uS5 family. As to quaternary structure, part of the 30S ribosomal subunit. Contacts proteins S4 and S8.

With S4 and S12 plays an important role in translational accuracy. Its function is as follows. Located at the back of the 30S subunit body where it stabilizes the conformation of the head with respect to the body. The polypeptide is Small ribosomal subunit protein uS5 (Prochlorococcus marinus (strain MIT 9303)).